The sequence spans 47 residues: Lysis protein for colicin E8 (47 aa).

Positions 1–19 (MKKITGIILLLLAVIILAA) are cleaved as a signal peptide. A lipid anchor (N-palmitoyl cysteine) is attached at Cys-20. The S-diacylglycerol cysteine moiety is linked to residue Cys-20.

Its subcellular location is the cell outer membrane. Functionally, lysis proteins are required for both colicin release and partial cell lysis. In Escherichia coli, this protein is Lysis protein for colicin E8 (lys).